The primary structure comprises 153 residues: Pheromone-binding protein Gp-9 (153 aa).

Positions methionine 1–alanine 19 are cleaved as a signal peptide. 3 disulfide bridges follow: cysteine 37-cysteine 77, cysteine 73-cysteine 129, and cysteine 118-cysteine 138.

This sequence belongs to the PBP/GOBP family. As to quaternary structure, homodimer.

It localises to the secreted. In terms of biological role, colony queen number, a major feature of social organization, is associated with worker genotype for Gp-9. Colonies are headed by either a single reproductive queen (monogyne form) or multiple queens (polygyne form). Differences in worker Gp-9 genotypes between social forms may cause differences in workers' abilities to recognize queens and regulate their numbers. This Solenopsis electra (Fire ant) protein is Pheromone-binding protein Gp-9.